The sequence spans 268 residues: MGLVVVGAGGRMGQTLIRTIQSIEGAKLVGAIERSGSPFLGKDAGEVTGIGTLGVAITDDPLPVFAKAHGVLDFTSPAASVEFAGLAAQARIVHVIGTTGCSAEDDEKIRAAARHATIVKSGNMSLGVNLLSVLVQKAAEALGPEDFDIEILEMHHRHKVDAPSGTALLLGEAAARGRDIALADNSVRVRDGYTGPRETGAIGFATLRGGSVIGDHSVILAGTGERVVLSHHAEDRSIFARGAIKAALWAHGKKPGLYSMLDVLGLNT.

NAD(+) contacts are provided by residues 7 to 12 and Glu33; that span reads GAGGRM. Arg34 serves as a coordination point for NADP(+). NAD(+) contacts are provided by residues 97 to 99 and 121 to 124; these read GTT and SGNM. His155 acts as the Proton donor/acceptor in catalysis. His156 lines the (S)-2,3,4,5-tetrahydrodipicolinate pocket. Lys159 acts as the Proton donor in catalysis. Position 165-166 (165-166) interacts with (S)-2,3,4,5-tetrahydrodipicolinate; it reads GT.

It belongs to the DapB family.

The protein localises to the cytoplasm. The enzyme catalyses (S)-2,3,4,5-tetrahydrodipicolinate + NAD(+) + H2O = (2S,4S)-4-hydroxy-2,3,4,5-tetrahydrodipicolinate + NADH + H(+). The catalysed reaction is (S)-2,3,4,5-tetrahydrodipicolinate + NADP(+) + H2O = (2S,4S)-4-hydroxy-2,3,4,5-tetrahydrodipicolinate + NADPH + H(+). It functions in the pathway amino-acid biosynthesis; L-lysine biosynthesis via DAP pathway; (S)-tetrahydrodipicolinate from L-aspartate: step 4/4. Its function is as follows. Catalyzes the conversion of 4-hydroxy-tetrahydrodipicolinate (HTPA) to tetrahydrodipicolinate. In Brucella abortus (strain 2308), this protein is 4-hydroxy-tetrahydrodipicolinate reductase.